A 35-amino-acid chain; its full sequence is Putative gene 58 protein (35 aa).

The polypeptide is Putative gene 58 protein (58) (Bacillus phage SP01 (Bacteriophage SP01)).